Consider the following 270-residue polypeptide: MAVGVFDSGLGGLTVLDAVQRRLPEVPFVYFGDNAHAPYGVRDADDIFALTCAATERLWAEGCDLVILACNTASAAALKRMQESWIPRDKRVLGVFVPLIEALTERQWGDNSPPREVAVKHVALFATPATVASRAFQRELAFRAIGVDVEAQPCGGVVDAIEQGDEILAEALVRSHVEALKRRMPHPQAAILGCTHYPLMEATFQEALGPEVTVYSQANLVAESLADYLARRPEFVGQGTESKFLTTGDPRSVSNKATQFLRRRITFEAA.

Substrate is bound by residues 7-8 and 39-40; these read DS and YG. The active-site Proton donor/acceptor is the C70. Residue 71 to 72 participates in substrate binding; that stretch reads NT. The active-site Proton donor/acceptor is the C194. 195–196 is a binding site for substrate; it reads TH.

This sequence belongs to the aspartate/glutamate racemases family.

The catalysed reaction is L-glutamate = D-glutamate. It participates in cell wall biogenesis; peptidoglycan biosynthesis. Functionally, provides the (R)-glutamate required for cell wall biosynthesis. The polypeptide is Glutamate racemase (Cereibacter sphaeroides (strain ATCC 17025 / ATH 2.4.3) (Rhodobacter sphaeroides)).